Here is a 146-residue protein sequence, read N- to C-terminus: Leghemoglobin 49 (146 aa).

Positions 2 to 146 (GFTQQQEALV…LATAIKKAMS (145 aa)) constitute a Globin domain. Nitrated tyrosine occurs at positions 24 and 29. Ser44 lines the heme b pocket. Ser44 is modified (phosphoserine). Residue His61 participates in O2 binding. Heme b-binding residues include His93 and Lys96. At Tyr134 the chain carries Nitrated tyrosine.

The protein belongs to the plant globin family. As to quaternary structure, monomer. In terms of processing, nitrated in effective nodules and particularly in hypoxic conditions; this mechanism may play a protective role in the symbiosis by buffering toxic peroxynitrite NO(2)(-). Nitration level decrease during nodule senescence. Phosphorylation at Ser-44 disrupts the molecular environment of its porphyrin ring oxygen binding pocket, thus leading to a reduced oxygen consumption and to the delivery of oxygen O(2) to symbiosomes. As to expression, accumulates in root nodules after inoculation by bacteria of the genus Rhizobium.

Its subcellular location is the cytoplasm. The protein localises to the cytosol. It localises to the nucleus. Leghemoglobin that reversibly binds oxygen O(2) through a pentacoordinated heme iron. In root nodules, facilitates the diffusion of oxygen to the bacteroids while preventing the bacterial nitrogenase from being inactivated by buffering dioxygen, nitric oxide and carbon monoxide, and promoting the formation of reactive oxygen species (ROS, e.g. H(2)O(2)). This role is essential for symbiotic nitrogen fixation (SNF). The protein is Leghemoglobin 49 of Vicia faba (Broad bean).